The primary structure comprises 2604 residues: BEACH domain-containing protein B (2604 aa).

The BEACH-type PH domain occupies 1761-1912 (VGTSEVLTSV…NAKEVGMLIV (152 aa)). Positions 1936–2226 (DRRIAMEMAE…QIFRKKHPRR (291 aa)) constitute a BEACH domain. 6 WD repeats span residues 2254-2293 (HSPS…SGGN), 2368-2407 (HHKD…TPEK), 2433-2474 (GHDD…RSLK), 2476-2515 (PSGS…LASS), 2516-2557 (ESNG…KRYN), and 2558-2596 (GAGK…HRKP).

In terms of biological role, may be involved in the suppression of BCHC1 activity. This is BEACH domain-containing protein B from Arabidopsis thaliana (Mouse-ear cress).